The chain runs to 274 residues: Non-heme haloperoxidase (274 aa).

Positions 22 to 254 constitute an AB hydrolase-1 domain; that stretch reads PIMFHHGWPL…RLKVYPGLSH (233 aa). Active-site residues include S95, D225, and H254.

The protein belongs to the AB hydrolase superfamily. Bacterial non-heme haloperoxidase / perhydrolase family.

This chain is Non-heme haloperoxidase (thcF), found in Rhodococcus erythropolis (Arthrobacter picolinophilus).